The following is a 578-amino-acid chain: Polymerase acidic protein (578 aa).

The RNA polymerase is composed of three subunits: PB1, PB2 and PA. Post-translationally, phosphorylated on serines and threonines by host kinases.

Its function is as follows. Implicated in endonuclease cleavage of capped RNA primers. Displays an elongation factor activity in viral RNA synthesis. Dispensable for viral transcription, but not replication. This Infectious salmon anemia virus (isolate Atlantic salmon/Norway/810/9/99) (ISAV) protein is Polymerase acidic protein.